Here is a 347-residue protein sequence, read N- to C-terminus: Palmitoyltransferase ZDHHC11 (347 aa).

The Cytoplasmic segment spans residues 1–46 (MKEMNICGINKNWVLPEAQENNVKKFLPRPLSRVNGWSPPLHSFQA). Residues 47-67 (ISWITYLAMSIVTFGIFIPFL) form a helical membrane-spanning segment. Over 68-75 (PYSWKYAA) the chain is Lumenal. A helical membrane pass occupies residues 76-96 (NIVMGGVFIFHLIVHLIAITI). Residues 97–170 (DPADTNVRLK…LNNCVGRRNY (74 aa)) lie on the Cytoplasmic side of the membrane. Positions 128 to 178 (QYCHLCEVTASKKAKHCSACNKCVSGFDHHCKWLNNCVGRRNYWFFFWSVA) constitute a DHHC domain. The S-palmitoyl cysteine intermediate role is filled by C158. The helical transmembrane segment at 171–191 (WFFFWSVASAAVGILGVMIIL) threads the bilayer. Over 192 to 234 (CYICIQYFVNPDELRTDPLYKEIISENTWLLFLSLWPVPVKTP) the chain is Lumenal. The chain crosses the membrane as a helical span at residues 235-255 (IVLSIAVMALLLAIASFVMLG). The Cytoplasmic segment spans residues 256–347 (HLLIFHLYLI…SPPKICHSED (92 aa)). A compositionally biased stretch (basic and acidic residues) spans 291-306 (ELPLQKKGDLPQEKSD). The disordered stretch occupies residues 291 to 332 (ELPLQKKGDLPQEKSDNWAWPKSPPRVGSQKFPVSTLSPKSS). A compositionally biased stretch (polar residues) spans 322-331 (FPVSTLSPKS).

This sequence belongs to the DHHC palmitoyltransferase family. Interacts with IRF3 and STING1; in presence of DNA viruses recruits IRF3 to STING1 promoting IRF3 phosphorylation and activation.

The protein localises to the endosome membrane. The catalysed reaction is L-cysteinyl-[protein] + hexadecanoyl-CoA = S-hexadecanoyl-L-cysteinyl-[protein] + CoA. In terms of biological role, endoplasmic reticulum-localized palmitoyltransferase that could catalyze the addition of palmitate onto various protein substrates and be involved in a variety of cellular processes. Has a palmitoyltransferase activity toward NCDN and regulates NCDN association with endosome membranes through this palmitoylation. May play a role in cell proliferation. Functionally, also has a palmitoyltransferase activity-independent function in DNA virus-triggered and CGAS-mediated innate immune response. Functions as an adapter that recruits IRF3 to STING1 to promote the activation of that key transcriptional regulator of type I interferon (IFN)-dependent immune response. The sequence is that of Palmitoyltransferase ZDHHC11 from Mus musculus (Mouse).